The primary structure comprises 220 residues: Protein Syd (220 aa).

It belongs to the Syd family.

It is found in the cell inner membrane. Functionally, interacts with the SecY protein in vivo. May bind preferentially to an uncomplexed state of SecY, thus functioning either as a chelating agent for excess SecY in the cell or as a regulatory factor that negatively controls the translocase function. The polypeptide is Protein Syd (Shewanella loihica (strain ATCC BAA-1088 / PV-4)).